The chain runs to 115 residues: Methylmalonyl-CoA decarboxylase subunit delta (115 aa).

Residues 11–31 form a helical membrane-spanning segment; it reads WLIMAINMTVVFAVLIALGIL. The disordered stretch occupies residues 46–70; it reads EAPAATAPVATPTATPVAPANASAQ. Low complexity predominate over residues 48–65; the sequence is PAATAPVATPTATPVAPA.

Belongs to the OadG family. As to quaternary structure, the methylmalonyl-CoA decarboxylase is composed of five subunits: the carboxyltransferase alpha subunit (MmdA), the tunnel beta subunit (MmdB), the biotin-containing gamma subunit (MmdC), and the delta (MmdD) and epsilon (MmdE) subunits. Post-translationally, the N-terminus is blocked.

It is found in the cell membrane. The enzyme catalyses (S)-methylmalonyl-CoA + Na(+)(in) + H(+)(out) = propanoyl-CoA + Na(+)(out) + CO2. Completely inhibited by avidin. Subunit of the sodium ion pump methylmalonyl-CoA decarboxylase, which converts the chemical energy of a decarboxylation reaction into an electrochemical gradient of Na(+) ions across the cytoplasmic membrane, thereby creating a sodium ion motive force that is used for ATP synthesis. The delta subunit is required for catalytic activity as well as for the proper assembly of the individual subunits to an enzyme complex. Can also convert malonyl-CoA into acetyl-CoA. The protein is Methylmalonyl-CoA decarboxylase subunit delta of Veillonella parvula (Staphylococcus parvulus).